Here is a 709-residue protein sequence, read N- to C-terminus: Polyribonucleotide nucleotidyltransferase (709 aa).

Positions 490 and 496 each coordinate Mg(2+). In terms of domain architecture, KH spans 557-616 (PKVITMRVLPEKIPVIIGPSGKNIKKIIDETGVKIDLDQEGLVRIYAVDGESADKAKEMI). The 69-residue stretch at 626-694 (GEVYMGKVTR…EMGRAKVSLK (69 aa)) folds into the S1 motif domain.

This sequence belongs to the polyribonucleotide nucleotidyltransferase family. It depends on Mg(2+) as a cofactor.

The protein resides in the cytoplasm. The enzyme catalyses RNA(n+1) + phosphate = RNA(n) + a ribonucleoside 5'-diphosphate. In terms of biological role, involved in mRNA degradation. Catalyzes the phosphorolysis of single-stranded polyribonucleotides processively in the 3'- to 5'-direction. The chain is Polyribonucleotide nucleotidyltransferase from Persephonella marina (strain DSM 14350 / EX-H1).